The following is a 428-amino-acid chain: Delta-aminolevulinic acid dehydratase, chloroplastic (428 aa).

Residue lysine 294 is the Schiff-base intermediate with substrate of the active site. 5-aminolevulinate-binding residues include arginine 304 and lysine 316. Glutamate 332 serves as a coordination point for Mg(2+). The Schiff-base intermediate with substrate role is filled by lysine 347. 5-aminolevulinate is bound by residues serine 373 and tyrosine 412.

It belongs to the ALAD family. In terms of assembly, homooctamer. Mg(2+) serves as cofactor.

It is found in the plastid. Its subcellular location is the chloroplast. The enzyme catalyses 2 5-aminolevulinate = porphobilinogen + 2 H2O + H(+). It functions in the pathway porphyrin-containing compound metabolism; protoporphyrin-IX biosynthesis; coproporphyrinogen-III from 5-aminolevulinate: step 1/4. Functionally, catalyzes an early step in the biosynthesis of tetrapyrroles. Binds two molecules of 5-aminolevulinate per subunit, each at a distinct site, and catalyzes their condensation to form porphobilinogen. The protein is Delta-aminolevulinic acid dehydratase, chloroplastic (HEMB) of Hordeum vulgare (Barley).